Consider the following 921-residue polypeptide: Sodium/calcium exchanger 2 (921 aa).

Positions 1 to 20 (MAPLALMGVVLLLGVPHCLG) are cleaved as a signal peptide. The disordered stretch occupies residues 23-42 (TPTPSLPPPTANDSDASPEG). Residues 69 to 89 (VARAVVYFVAMVYMFLGVSII) form a helical membrane-spanning segment. 2 N-linked (GlcNAc...) asparagine glycosylation sites follow: Asn125 and Asn130. The next 4 helical transmembrane spans lie at 131–151 (LTLM…IEVC), 165–185 (IVGS…YVIP), 197–217 (VFFV…LILA), and 226–246 (VWEA…AWMA). Residues 248–267 (KRLLFYKYVYKRYRTDPRSG) are putative calmodulin-binding region. The disordered stretch occupies residues 371–391 (HAADAARRPGATDGAPDDEDD). Calx-beta domains lie at 389–482 (EDDG…FVRL) and 512–611 (ATVT…FIEL). Residues Glu407, Asp443, Asp468, Asp469, Ile471, Glu473, Glu476, Asp518, Asp519, Asp520, Glu536, Asp598, Glu599, and Glu600 each coordinate Ca(2+). A Phosphoserine modification is found at Ser622. Glu665 is a binding site for Ca(2+). 6 helical membrane passes run 721 to 741 (CFDY…ACVP), 749 to 769 (WACF…IGDL), 786 to 806 (VVFV…VAAL), 823 to 843 (AVNV…YWAV), 855 to 875 (LAFS…VLLY), and 893 to 913 (LATT…SSLE).

It belongs to the Ca(2+):cation antiporter (CaCA) (TC 2.A.19) family. SLC8 subfamily. In terms of tissue distribution, detected in kidney cortex, in distal convoluted tubules and connecting segments. Detected in brain and spinal cord (at protein level). Detected in brain, especially in hippocampus CA1, CA2 and CA3 fiels, dentate gyrus, cerebellum and brain cortex.

It localises to the cell membrane. The protein localises to the basolateral cell membrane. It catalyses the reaction Ca(2+)(in) + 3 Na(+)(out) = Ca(2+)(out) + 3 Na(+)(in). Calcium transport is down-regulated by Na(+) and stimulated by Ca(2+). Functionally, mediates the electrogenic exchange of Ca(2+) against Na(+) ions across the cell membrane, and thereby contributes to the regulation of cytoplasmic Ca(2+) levels and Ca(2+)-dependent cellular processes. Contributes to cellular Ca(2+) homeostasis in excitable cells. Contributes to the rapid decrease of cytoplasmic Ca(2+) levels back to baseline after neuronal activation, and thereby contributes to modulate synaptic plasticity, learning and memory. Plays a role in regulating urinary Ca(2+) and Na(+) excretion. This is Sodium/calcium exchanger 2 from Mus musculus (Mouse).